The following is a 446-amino-acid chain: Phosphoglucosamine mutase (446 aa).

Residue serine 101 is the Phosphoserine intermediate of the active site. Mg(2+) is bound by residues serine 101, aspartate 240, aspartate 242, and aspartate 244. Phosphoserine is present on serine 101.

Belongs to the phosphohexose mutase family. Requires Mg(2+) as cofactor. Post-translationally, activated by phosphorylation.

The catalysed reaction is alpha-D-glucosamine 1-phosphate = D-glucosamine 6-phosphate. Catalyzes the conversion of glucosamine-6-phosphate to glucosamine-1-phosphate. The polypeptide is Phosphoglucosamine mutase (Coxiella burnetii (strain CbuK_Q154) (Coxiella burnetii (strain Q154))).